The primary structure comprises 324 residues: Phospho-N-acetylmuramoyl-pentapeptide-transferase (324 aa).

A run of 10 helical transmembrane segments spans residues 5–25 (VILF…PILI), 50–70 (GTPT…AIVM), 77–97 (LSAE…LGFL), 117–137 (LIGQ…CHFS), 147–167 (LSID…VGGS), 176–196 (LDGL…ILAW), 203–223 (VAIF…FNAH), 227–247 (VFMG…VAIL), 250–270 (LEIL…SVIL), and 302–322 (VVVT…YIEV).

It belongs to the glycosyltransferase 4 family. MraY subfamily. Mg(2+) serves as cofactor.

It is found in the cell membrane. The enzyme catalyses UDP-N-acetyl-alpha-D-muramoyl-L-alanyl-gamma-D-glutamyl-meso-2,6-diaminopimeloyl-D-alanyl-D-alanine + di-trans,octa-cis-undecaprenyl phosphate = di-trans,octa-cis-undecaprenyl diphospho-N-acetyl-alpha-D-muramoyl-L-alanyl-D-glutamyl-meso-2,6-diaminopimeloyl-D-alanyl-D-alanine + UMP. Its pathway is cell wall biogenesis; peptidoglycan biosynthesis. In terms of biological role, catalyzes the initial step of the lipid cycle reactions in the biosynthesis of the cell wall peptidoglycan: transfers peptidoglycan precursor phospho-MurNAc-pentapeptide from UDP-MurNAc-pentapeptide onto the lipid carrier undecaprenyl phosphate, yielding undecaprenyl-pyrophosphoryl-MurNAc-pentapeptide, known as lipid I. This Bacillus velezensis (strain DSM 23117 / BGSC 10A6 / LMG 26770 / FZB42) (Bacillus amyloliquefaciens subsp. plantarum) protein is Phospho-N-acetylmuramoyl-pentapeptide-transferase.